Consider the following 535-residue polypeptide: Alpha-1,3-mannosyl-glycoprotein 4-beta-N-acetylglucosaminyltransferase A (535 aa).

Residues 1–6 lie on the Cytoplasmic side of the membrane; the sequence is MRLRNG. Residues 7 to 27 form a helical; Signal-anchor for type II membrane protein membrane-spanning segment; that stretch reads TVATVLVFITTFLSLSWYTAW. Residues 28 to 54 are a coiled coil; sequence QNGKEKLIAYQREFHALKERLRIAEHR. Residues 28 to 535 are Lumenal-facing; sequence QNGKEKLIAY…NEIHIKKMTN (508 aa). Residues asparagine 77, asparagine 85, and asparagine 458 are each glycosylated (N-linked (GlcNAc...) asparagine).

Belongs to the glycosyltransferase 54 family. Requires a divalent metal cation as cofactor. N-glycosylated.

It localises to the golgi apparatus membrane. Its subcellular location is the secreted. The catalysed reaction is N(4)-{beta-D-GlcNAc-(1-&gt;2)-alpha-D-Man-(1-&gt;3)-[beta-D-GlcNAc-(1-&gt;2)-alpha-D-Man-(1-&gt;6)]-beta-D-Man-(1-&gt;4)-beta-D-GlcNAc-(1-&gt;4)-beta-D-GlcNAc}-L-asparaginyl-[protein] + UDP-N-acetyl-alpha-D-glucosamine = N(4)-{beta-D-GlcNAc-(1-&gt;2)-[beta-D-GlcNAc-(1-&gt;4)]-alpha-D-Man-(1-&gt;3)-[beta-D-GlcNAc-(1-&gt;2)-alpha-D-Man-(1-&gt;6)]-beta-D-Man-(1-&gt;4)-beta-D-GlcNAc-(1-&gt;4)-beta-D-GlcNAc}-L-asparaginyl-[protein] + UDP + H(+). It carries out the reaction an N(4)-{beta-D-GlcNAc-(1-&gt;2)-alpha-D-Man-(1-&gt;3)-[alpha-D-Man-(1-&gt;6)]-beta-D-Man-(1-&gt;4)-beta-D-GlcNAc-(1-&gt;4)-beta-D-GlcNAc}-L-asparaginyl-[protein] + UDP-N-acetyl-alpha-D-glucosamine = an N(4)-{beta-D-GlcNAc-(1-&gt;2)-[beta-D-GlcNAc-(1-&gt;4)]-alpha-D-Man-(1-&gt;3)-[alpha-D-Man-(1-&gt;6)]-beta-D-Man-(1-&gt;4)-beta-D-GlcNAc-(1-&gt;4)-beta-D-GlcNAc}-L-asparaginyl-[protein] + UDP + H(+). The enzyme catalyses an N(4)-{beta-D-GlcNAc-(1-&gt;2)-alpha-D-Man-(1-&gt;3)-[beta-D-GlcNAc-(1-&gt;2)-[beta-D-GlcNAc-(1-&gt;6)]-alpha-D-Man-(1-&gt;6)]-beta-D-Man-(1-&gt;4)-beta-D-GlcNAc-(1-&gt;4)-beta-D-GlcNAc}-L-asparaginyl-[protein] + UDP-N-acetyl-alpha-D-glucosamine = an N(4)-{beta-D-GlcNAc-(1-&gt;2)-[beta-D-GlcNAc-(1-&gt;4)]-alpha-D-Man-(1-&gt;3)-[beta-D-GlcNAc-(1-&gt;2)-[beta-D-GlcNAc-(1-&gt;6)]-alpha-D-Man-(1-&gt;6)]-beta-D-Man-(1-&gt;4)-beta-D-GlcNAc-(1-&gt;4)-beta-D-GlcNAc}-L-asparaginyl-[protein] + UDP + H(+). It catalyses the reaction an N(4)-{beta-D-GlcNAc-(1-&gt;2)-alpha-D-Man-(1-&gt;3)-[beta-D-GlcNAc-(1-&gt;2)-alpha-D-Man-(1-&gt;6)]-beta-D-Man-(1-&gt;4)-beta-D-GlcNAc-(1-&gt;4)-[alpha-L-Fuc-(1-&gt;6)]-beta-D-GlcNAc}-L-asparaginyl-[protein] + UDP-N-acetyl-alpha-D-glucosamine = N(4)-{beta-D-GlcNAc-(1-&gt;2)-[beta-D-GlcNAc-(1-&gt;4)]-alpha-D-Man-(1-&gt;3)-[beta-D-GlcNAc-(1-&gt;2)-alpha-D-Man-(1-&gt;6)]-beta-D-Man-(1-&gt;4)-beta-D-GlcNAc-(1-&gt;4)-[alpha-L-Fuc-(1-&gt;6)]-beta-D-GlcNAc}-asparaginyl-[protein] + UDP + H(+). The catalysed reaction is an N(4)-{beta-D-GlcNAc-(1-&gt;2)-alpha-D-Man-(1-&gt;3)-[beta-D-Gal-(1-&gt;4)-beta-D-GlcNAc-(1-&gt;2)-alpha-D-Man-(1-&gt;6)]-beta-D-Man-(1-&gt;4)-beta-D-GlcNAc-(1-&gt;4)-beta-D-GlcNAc}-L-asparaginyl-[protein] + UDP-N-acetyl-alpha-D-glucosamine = an N(4)-{beta-D-GlcNAc-(1-&gt;2)-[beta-D-GlcNAc-(1-&gt;4)]-alpha-D-Man-(1-&gt;3)-[beta-D-Gal-(1-&gt;4)-beta-D-GlcNAc-(1-&gt;2)-alpha-D-Man-(1-&gt;6)]-beta-D-Man-(1-&gt;4)-beta-D-GlcNAc-(1-&gt;4)-beta-D-GlcNAc}-L-asparaginyl-[protein] + UDP + H(+). It carries out the reaction N(4)-{beta-D-GlcNAc-(1-&gt;2)-alpha-D-Man-(1-&gt;3)-[alpha-D-Man-(1-&gt;3)-{alpha-D-Man-(1-&gt;6)}-alpha-D-Man-(1-&gt;6)]-beta-D-Man-(1-&gt;4)-beta-D-GlcNAc-(1-&gt;4)-beta-D-GlcNAc}-asparaginyl-[protein] + UDP-N-acetyl-alpha-D-glucosamine = N(4)-{beta-D-GlcNAc-(1-&gt;2)-[beta-D-GlcNAc-(1-&gt;4)]-alpha-D-Man-(1-&gt;3)-[alpha-D-Man-(1-&gt;3)-{alpha-D-Man-(1-&gt;6)}-alpha-D-Man-(1-&gt;6)]-beta-D-Man-(1-&gt;4)-beta-D-GlcNAc-(1-&gt;4)-beta-D-GlcNAc}-asparaginyl-[protein] + UDP + H(+). The enzyme catalyses N(4)-{beta-D-GlcNAc-(1-&gt;2)-alpha-D-Man-(1-&gt;3)-beta-D-Man-(1-&gt;4)-beta-D-GlcNAc-(1-&gt;4)-beta-D-GlcNAc}-asparaginyl-[protein] + UDP-N-acetyl-alpha-D-glucosamine = N(4)-{beta-D-GlcNAc-(1-&gt;2)-[beta-D-GlcNAc-(1-&gt;4)]-alpha-D-Man-(1-&gt;3)-beta-D-Man-(1-&gt;4)-beta-D-GlcNAc-(1-&gt;4)-beta-D-GlcNAc}-asparaginyl-[protein] + UDP + H(+). Its pathway is protein modification; protein glycosylation. Inhibited by UDP. In terms of biological role, glycosyltransferase that catalyze the transfer of GlcNAc from UDP-GlcNAc to the GlcNAcbeta1-2Manalpha1-3 arm of the core structure of N-linked glycans through a beta1-4 linkage and participates in the production of tri- and tetra-antennary N-linked sugar chains. Involved in glucose transport by mediating SLC2A2/GLUT2 glycosylation, thereby controlling cell-surface expression of SLC2A2 in pancreatic beta cells. The chain is Alpha-1,3-mannosyl-glycoprotein 4-beta-N-acetylglucosaminyltransferase A from Gallus gallus (Chicken).